A 237-amino-acid polypeptide reads, in one-letter code: Probable transcriptional regulatory protein EAT1b_0153 (237 aa).

Belongs to the TACO1 family. YeeN subfamily.

It localises to the cytoplasm. The protein is Probable transcriptional regulatory protein EAT1b_0153 of Exiguobacterium sp. (strain ATCC BAA-1283 / AT1b).